The chain runs to 256 residues: MPITANTLYRDSFNFLRNQIAAILLLALLTAFITVMLNQTFMPASEQLSILSIPENDITSSGNLSISEIVSQMTPEQQMVLLRVSAVATFSALVGNVLLVGGLLTLIAMVSQGRRVSALQAIGLSLPILPRLLVLMFISTLVIQLGLTFFIVPGVAIAIALSLSPIIVTNERMGIFAAMKASAQLAFANVRLIVPAMMLWIAVKLLLLFLISRFTVLPPTIATIVLSTLSNLASALLLVYLFRLYMLLRPVSLDKQ.

A run of 6 helical transmembrane segments spans residues 20 to 40, 90 to 110, 118 to 138, 141 to 161, 192 to 212, and 221 to 241; these read IAAI…LNQT, FSAL…IAMV, ALQA…LMFI, LVIQ…AIAL, LIVP…FLIS, and IATI…LVYL.

Belongs to the UPF0259 family.

The protein localises to the cell inner membrane. This is UPF0259 membrane protein YPO2199/y2042/YP_1997 from Yersinia pestis.